The sequence spans 175 residues: Ribosome maturation factor RimM (175 aa).

Positions 96 to 175 constitute a PRC barrel domain; that stretch reads DGDYYWKDLI…IIKVDWDPEF (80 aa).

It belongs to the RimM family. Binds ribosomal protein uS19.

It localises to the cytoplasm. An accessory protein needed during the final step in the assembly of 30S ribosomal subunit, possibly for assembly of the head region. Essential for efficient processing of 16S rRNA. May be needed both before and after RbfA during the maturation of 16S rRNA. It has affinity for free ribosomal 30S subunits but not for 70S ribosomes. This chain is Ribosome maturation factor RimM, found in Baumannia cicadellinicola subsp. Homalodisca coagulata.